A 108-amino-acid polypeptide reads, in one-letter code: Cytochrome c oxidase subunit 1 (108 aa).

Residues 10-30 (AFVAPVLGLLGFIPGGAGGIV) traverse the membrane as a helical segment. H49 contacts heme a3. The next 2 membrane-spanning stretches (helical) occupy residues 50–70 (FHLQ…YWLL) and 85–105 (LGLA…VGLH). H51 serves as a coordination point for Fe(II)-heme a.

Belongs to the heme-copper respiratory oxidase family. Heme is required as a cofactor. Cu cation serves as cofactor.

The protein localises to the cell membrane. It carries out the reaction 4 Fe(II)-[cytochrome c] + O2 + 8 H(+)(in) = 4 Fe(III)-[cytochrome c] + 2 H2O + 4 H(+)(out). Its pathway is energy metabolism; oxidative phosphorylation. The chain is Cytochrome c oxidase subunit 1 (cbaA) from Thermus thermophilus.